A 435-amino-acid polypeptide reads, in one-letter code: 3-phosphoshikimate 1-carboxyvinyltransferase (435 aa).

Residues Lys-15, Ser-16, and Arg-20 each coordinate 3-phosphoshikimate. Lys-15 is a binding site for phosphoenolpyruvate. The phosphoenolpyruvate site is built by Gly-96 and Arg-124. 3-phosphoshikimate contacts are provided by Ser-169, Gln-171, Thr-195, Asp-319, and Lys-346. Phosphoenolpyruvate is bound at residue Gln-171. Residue Asp-319 is the Proton acceptor of the active site. Residues Arg-350 and Arg-394 each contribute to the phosphoenolpyruvate site.

This sequence belongs to the EPSP synthase family. Monomer.

It is found in the cytoplasm. The enzyme catalyses 3-phosphoshikimate + phosphoenolpyruvate = 5-O-(1-carboxyvinyl)-3-phosphoshikimate + phosphate. It participates in metabolic intermediate biosynthesis; chorismate biosynthesis; chorismate from D-erythrose 4-phosphate and phosphoenolpyruvate: step 6/7. Its function is as follows. Catalyzes the transfer of the enolpyruvyl moiety of phosphoenolpyruvate (PEP) to the 5-hydroxyl of shikimate-3-phosphate (S3P) to produce enolpyruvyl shikimate-3-phosphate and inorganic phosphate. In Chloroherpeton thalassium (strain ATCC 35110 / GB-78), this protein is 3-phosphoshikimate 1-carboxyvinyltransferase.